Consider the following 526-residue polypeptide: Transcription factor kayak (526 aa).

Disordered stretches follow at residues P71–G165 and R178–A221. Composition is skewed to low complexity over residues N78 to G87 and I133 to G153. Residues N154–G165 show a composition bias toward gly residues. Residues R178–T187 are compositionally biased toward polar residues. The bZIP domain maps to E208–H271. Residues K210–R229 are basic motif. The interval L236–L264 is leucine-zipper. The segment covering G301–G322 has biased composition (low complexity). Disordered stretches follow at residues G301–P345 and T504–L526. Over residues T330–P340 the composition is skewed to polar residues. At S339 the chain carries Phosphoserine.

The protein belongs to the bZIP family. Fos subfamily. As to quaternary structure, homodimer. Heterodimer with Jra. The kay-Jra heterodimer binds more stably to the AP-1 site than either of the two proteins alone.

Its subcellular location is the nucleus. Its function is as follows. Developmentally regulated transcription factor AP-1 binds and recognizes the enhancer DNA sequence: 5'-TGA[CG]TCA-3'. May play a role in the function or determination of a particular subset of cells in the developing embryo. It is able to carry out its function either independently of or in conjunction with Jra. In Drosophila persimilis (Fruit fly), this protein is Transcription factor kayak.